Reading from the N-terminus, the 396-residue chain is Elongation factor Tu (396 aa).

The region spanning 10 to 205 is the tr-type G domain; sequence KPHVNIGTIG…AVDSYIPTPE (196 aa). The tract at residues 19 to 26 is G1; the sequence is GHVDHGKT. 19–26 contacts GTP; the sequence is GHVDHGKT. Thr26 serves as a coordination point for Mg(2+). The segment at 60-64 is G2; that stretch reads GITIN. The segment at 81 to 84 is G3; that stretch reads DCPG. GTP contacts are provided by residues 81–85 and 136–139; these read DCPGH and NKCD. The tract at residues 136-139 is G4; it reads NKCD. The tract at residues 174 to 176 is G5; that stretch reads SAK.

It belongs to the TRAFAC class translation factor GTPase superfamily. Classic translation factor GTPase family. EF-Tu/EF-1A subfamily. Monomer.

Its subcellular location is the cytoplasm. It catalyses the reaction GTP + H2O = GDP + phosphate + H(+). In terms of biological role, GTP hydrolase that promotes the GTP-dependent binding of aminoacyl-tRNA to the A-site of ribosomes during protein biosynthesis. In Brevibacillus brevis (strain 47 / JCM 6285 / NBRC 100599), this protein is Elongation factor Tu.